Reading from the N-terminus, the 55-residue chain is Large ribosomal subunit protein bL33 (55 aa).

Belongs to the bacterial ribosomal protein bL33 family.

In Sinorhizobium fredii (strain NBRC 101917 / NGR234), this protein is Large ribosomal subunit protein bL33.